Here is a 495-residue protein sequence, read N- to C-terminus: Tyrosine 3-monooxygenase (495 aa).

Ser19 carries the phosphoserine; by CaMK2 modification. A Phosphoserine modification is found at Ser31. At Ser40 the chain carries Phosphoserine; by CaMK2 and PKA. Residues 41–53 show a composition bias toward basic and acidic residues; sequence LIEDARKEREKAE. The interval 41 to 65 is disordered; that stretch reads LIEDARKEREKAEAASAASSEPGDL. The Fe cation site is built by His328, His333, and Glu373. Residue Ser469 is modified to Phosphoserine.

It belongs to the biopterin-dependent aromatic amino acid hydroxylase family. As to quaternary structure, homotetramer. Interacts (when phosphorylated at Ser-19) with YWHAG; one YWHAG dimer bounds to one TH tetramer this interaction may influence the phosphorylation and dephosphorylation of other sites. Requires Fe(2+) as cofactor. Post-translationally, phosphorylated on Ser-19, Ser-31 and Ser-40 by several protein kinases with different site specificities. Phosphorylation at Ser-31 and Ser-40 leads to an increase of TH activity. Phosphorylation at Ser-40 activates the enzyme and also counteracts the feedback inhibition of TH by catecholamines. Phosphorylation of Ser-19 and Ser-31 triggers the proteasomal degradation of TH through the ubiquitin-proteasome pathway. Phosphorylation at Ser-31 facilitates transport of TH from the soma to the nerve terminals via the microtubule network. Phosphorylation at Ser-19 induces the high-affinity binding to the 14-3-3 protein YWHAG; this interaction may influence the phosphorylation and dephosphorylation of other sites. Ser-19 increases the phosphorylation at Ser-40 in a hierarchical manner, leading to increased activity.

It is found in the cytoplasm. It localises to the perinuclear region. Its subcellular location is the nucleus. The protein localises to the cell projection. The protein resides in the axon. It is found in the cytoplasmic vesicle. It localises to the secretory vesicle. Its subcellular location is the synaptic vesicle. It carries out the reaction (6R)-L-erythro-5,6,7,8-tetrahydrobiopterin + L-tyrosine + O2 = (4aS,6R)-4a-hydroxy-L-erythro-5,6,7,8-tetrahydrobiopterin + L-dopa. It functions in the pathway catecholamine biosynthesis; dopamine biosynthesis; dopamine from L-tyrosine: step 1/2. Its activity is regulated as follows. Inhibited in feedback fashion by the catecholamine neurotransmitters, especially by dopamine in competition with tetrahydrobiopterin. Phosphorylation of several Ser/Thr residues in the N-terminus regulates the catalytic activity. Ser-31 and Ser-40 are readily phosphorylated to activate the catalytic activity. A Cysteine modification induced by N-ethylmaleimide (NEM), inhibits tyrosine 3-monooxygenase activity through the modification of the Cys-174. Functionally, catalyzes the conversion of L-tyrosine to L-dihydroxyphenylalanine (L-Dopa), the rate-limiting step in the biosynthesis of cathecolamines, dopamine, noradrenaline, and adrenaline. Uses tetrahydrobiopterin and molecular oxygen to convert tyrosine to L-Dopa. In addition to tyrosine, is able to catalyze the hydroxylation of phenylalanine and tryptophan with lower specificity. Positively regulates the regression of retinal hyaloid vessels during postnatal development. The polypeptide is Tyrosine 3-monooxygenase (TH) (Canis lupus familiaris (Dog)).